We begin with the raw amino-acid sequence, 871 residues long: Translation initiation factor IF-2 (871 aa).

Residues 1 to 242 form a disordered region; it reads MVDTKNPGDK…PAAKPAPAKQ (242 aa). Low complexity predominate over residues 68-91; that stretch reads PASARTPAAKAPPARAATPAAPRA. Residues 115-174 are compositionally biased toward basic and acidic residues; sequence AKVRAEEERRIAEAEAARRNSKEGIEQAEREAAEARRKAEEERHRQEEEAKRKAEIEAKR. 2 stretches are compositionally biased toward low complexity: residues 182 to 206 and 225 to 241; these read KPAP…AVAA and ARPV…APAK. The tr-type G domain occupies 367–538; it reads PRSPVVTVMG…SLQADLLDLK (172 aa). The interval 376-383 is G1; the sequence is GHVDHGKT. Residue 376 to 383 coordinates GTP; it reads GHVDHGKT. The tract at residues 401 to 405 is G2; that stretch reads GITQH. The interval 424 to 427 is G3; sequence DTPG. Residues 424-428 and 478-481 contribute to the GTP site; these read DTPGH and NKID. The tract at residues 478–481 is G4; sequence NKID. Positions 514 to 516 are G5; the sequence is SAK.

This sequence belongs to the TRAFAC class translation factor GTPase superfamily. Classic translation factor GTPase family. IF-2 subfamily.

The protein resides in the cytoplasm. Its function is as follows. One of the essential components for the initiation of protein synthesis. Protects formylmethionyl-tRNA from spontaneous hydrolysis and promotes its binding to the 30S ribosomal subunits. Also involved in the hydrolysis of GTP during the formation of the 70S ribosomal complex. This chain is Translation initiation factor IF-2, found in Nitrobacter winogradskyi (strain ATCC 25391 / DSM 10237 / CIP 104748 / NCIMB 11846 / Nb-255).